The chain runs to 343 residues: Small ribosomal subunit biogenesis GTPase RsgA (343 aa).

The region spanning 116–275 (RGQLKPVAAN…LIDSPGIREF (160 aa)) is the CP-type G domain. Residues 163-166 (NKAD) and 217-225 (GQSGVGKSS) each bind GTP. Residues C299, C304, H306, and C312 each contribute to the Zn(2+) site.

This sequence belongs to the TRAFAC class YlqF/YawG GTPase family. RsgA subfamily. As to quaternary structure, monomer. Associates with 30S ribosomal subunit, binds 16S rRNA. It depends on Zn(2+) as a cofactor.

It is found in the cytoplasm. One of several proteins that assist in the late maturation steps of the functional core of the 30S ribosomal subunit. Helps release RbfA from mature subunits. May play a role in the assembly of ribosomal proteins into the subunit. Circularly permuted GTPase that catalyzes slow GTP hydrolysis, GTPase activity is stimulated by the 30S ribosomal subunit. The protein is Small ribosomal subunit biogenesis GTPase RsgA of Pseudomonas syringae pv. tomato (strain ATCC BAA-871 / DC3000).